A 379-amino-acid polypeptide reads, in one-letter code: DNA replication and repair protein RecF (379 aa).

Residue 30 to 37 (GKNAQGKT) participates in ATP binding.

Belongs to the RecF family.

Its subcellular location is the cytoplasm. The RecF protein is involved in DNA metabolism; it is required for DNA replication and normal SOS inducibility. RecF binds preferentially to single-stranded, linear DNA. It also seems to bind ATP. The polypeptide is DNA replication and repair protein RecF (Ligilactobacillus salivarius (strain UCC118) (Lactobacillus salivarius)).